The chain runs to 233 residues: Large ribosomal subunit protein uL1 (233 aa).

The protein belongs to the universal ribosomal protein uL1 family. In terms of assembly, part of the 50S ribosomal subunit.

Functionally, binds directly to 23S rRNA. The L1 stalk is quite mobile in the ribosome, and is involved in E site tRNA release. In terms of biological role, protein L1 is also a translational repressor protein, it controls the translation of the L11 operon by binding to its mRNA. This is Large ribosomal subunit protein uL1 from Shewanella baltica (strain OS185).